Reading from the N-terminus, the 81-residue chain is Large ribosomal subunit protein bL31B (81 aa).

This sequence belongs to the bacterial ribosomal protein bL31 family. Type B subfamily. In terms of assembly, part of the 50S ribosomal subunit.

The polypeptide is Large ribosomal subunit protein bL31B (Borreliella afzelii (strain PKo) (Borrelia afzelii)).